Reading from the N-terminus, the 1357-residue chain is Vascular endothelial growth factor receptor 3 (1357 aa).

The first 24 residues, 1–24 (MKRDFTFFCRIWIGIPFFSGLVNG), serve as a signal peptide directing secretion. 7 Ig-like C2-type domains span residues 25 to 121 (FSMS…YYRC), 138 to 244 (IFVF…VQVI), 255 to 343 (PEDS…RELT), 352 to 442 (PFIS…LNFT), 453 to 583 (EKEA…TTIP), 583 to 690 (PEGF…HRKY), and 699 to 785 (PRYR…ATVS). Topologically, residues 25-796 (FSMSPPTLDN…IGSDDKTNVE (772 aa)) are extracellular. N-linked (GlcNAc...) asparagine glycans are attached at residues asparagine 44, asparagine 48, asparagine 114, asparagine 216, and asparagine 271. 2 disulfides stabilise this stretch: cysteine 51–cysteine 121 and cysteine 173–cysteine 225. A disulfide bond links cysteine 272 and cysteine 331. 3 N-linked (GlcNAc...) asparagine glycosylation sites follow: asparagine 360, asparagine 400, and asparagine 440. 3 cysteine pairs are disulfide-bonded: cysteine 473–cysteine 562, cysteine 493–cysteine 514, and cysteine 606–cysteine 674. Residues asparagine 553, asparagine 610, asparagine 660, asparagine 707, asparagine 711, and asparagine 751 are each glycosylated (N-linked (GlcNAc...) asparagine). Cysteines 720 and 772 form a disulfide. The helical transmembrane segment at 797-817 (IVILIGTGVIAIFFWVLLLVI) threads the bilayer. The Cytoplasmic segment spans residues 818-1357 (FCNVKRVNPA…DYFSSSDQAV (540 aa)). Residues 866-1181 (LRLGKVLGHG…ALVEILGDLL (316 aa)) enclose the Protein kinase domain. ATP-binding positions include 872 to 880 (LGHGAFGKV) and lysine 900. The disordered stretch occupies residues 978–1007 (QSQVRRMIEAGQASQSEHQPSTSSTNPPRV). The segment covering 989–1005 (QASQSEHQPSTSSTNPP) has biased composition (polar residues). Aspartate 1045 functions as the Proton acceptor in the catalytic mechanism. Phosphotyrosine; by autocatalysis is present on residues tyrosine 1071 and tyrosine 1076. Residues 1192 to 1212 (NVSQSSEDDGFSQASSRPPSQ) form a disordered region. 4 positions are modified to phosphotyrosine; by autocatalysis: tyrosine 1226, tyrosine 1227, tyrosine 1334, and tyrosine 1338.

Belongs to the protein kinase superfamily. Tyr protein kinase family. CSF-1/PDGF receptor subfamily. In terms of assembly, interacts with vegfc and vegfd. Monomer in the absence of bound vegfc or vegfd. Homodimer in the presence of bound vegfc or vegfd. Autophosphorylated on tyrosine residues upon ligand binding. Autophosphorylation occurs in trans, i.e. one subunit of the dimeric receptor phosphorylates tyrosine residues on the other subunit.

The protein resides in the cell membrane. The protein localises to the cytoplasm. It is found in the nucleus. It carries out the reaction L-tyrosyl-[protein] + ATP = O-phospho-L-tyrosyl-[protein] + ADP + H(+). Its activity is regulated as follows. Present in an inactive conformation in the absence of bound ligand. Binding of vegfc or vegfd leads to dimerization and activation by autophosphorylation on tyrosine residues. Functionally, tyrosine-protein kinase that acts as a cell-surface receptor for vegf or vegfc. Combinations of multiple VEGF receptors are required for development of different blood vessel types in the embryo. Involved in angiogenesis, specifically in VEGF-induced sprouting of new blood vessels, but not required for proper vasculogenesis or hematopoiesis. In Danio rerio (Zebrafish), this protein is Vascular endothelial growth factor receptor 3 (flt4).